The sequence spans 1186 residues: ATP-dependent helicase/nuclease subunit A (1186 aa).

A UvrD-like helicase ATP-binding domain is found at 2–460 (NFSKNQRAVI…IELSENYRSQ (459 aa)). 23-30 (ASAGSGKT) provides a ligand contact to ATP. The UvrD-like helicase C-terminal domain occupies 487 to 771 (DVELKAANRD…SVMTIHAAKG (285 aa)).

This sequence belongs to the helicase family. AddA subfamily. In terms of assembly, heterodimer of AddA and AddB/RexB. The cofactor is Mg(2+).

The catalysed reaction is Couples ATP hydrolysis with the unwinding of duplex DNA by translocating in the 3'-5' direction.. It catalyses the reaction ATP + H2O = ADP + phosphate + H(+). Its function is as follows. The heterodimer acts as both an ATP-dependent DNA helicase and an ATP-dependent, dual-direction single-stranded exonuclease. Recognizes the chi site generating a DNA molecule suitable for the initiation of homologous recombination. The AddA nuclease domain is required for chi fragment generation; this subunit has the helicase and 3' -&gt; 5' nuclease activities. This Oenococcus oeni (strain ATCC BAA-331 / PSU-1) protein is ATP-dependent helicase/nuclease subunit A.